Consider the following 89-residue polypeptide: MSLNATEKAAIVAEYAQSEGDTGSPEVQVALLTTQINHLQGHFKAHIHDHHSRRGLLRMVAQRRKLLDYLKGKNVDRYGALIGKLGLRR.

Belongs to the universal ribosomal protein uS15 family. In terms of assembly, part of the 30S ribosomal subunit. Forms a bridge to the 50S subunit in the 70S ribosome, contacting the 23S rRNA.

One of the primary rRNA binding proteins, it binds directly to 16S rRNA where it helps nucleate assembly of the platform of the 30S subunit by binding and bridging several RNA helices of the 16S rRNA. In terms of biological role, forms an intersubunit bridge (bridge B4) with the 23S rRNA of the 50S subunit in the ribosome. In Colwellia psychrerythraea (strain 34H / ATCC BAA-681) (Vibrio psychroerythus), this protein is Small ribosomal subunit protein uS15.